The primary structure comprises 56 residues: TAEDSRGTQLHRALRKATKLPVSTRCITPGTRCKVPSQCCRGPCKNGRCTPSPSEW.

The first 2 residues, 1 to 2 (TA), serve as a signal peptide directing secretion. Residues 3 to 25 (EDSRGTQLHRALRKATKLPVSTR) constitute a propeptide that is removed on maturation. 3 disulfide bridges follow: Cys-26-Cys-40, Cys-33-Cys-44, and Cys-39-Cys-49.

It belongs to the conotoxin O1 superfamily. Expressed by the venom duct.

It localises to the secreted. The sequence is that of Conotoxin Bu12 from Conus bullatus (Bubble cone).